We begin with the raw amino-acid sequence, 465 residues long: MSQGKIVQIIGAVVDVEFPRDMIPRVYDALKLDENGLTLEVQQLLGDGVVRTIAMGSSDGLKRGMTVSNTGSPITVPVGKGTLGRIVDVLGTPVDEAGPIDTDKSRAIHQAAPKFDELSSTTELLETGIKVIDLLCPFAKGGKVGLFGGAGVGKTVNMMELINNIAKAHSGLSVFSGVGERTREGNDFYHEMKDSNVLDKVAMVYGQMNEPPGNRLRVALTGLTMAEYFRDEKDENGKGRDVLFFVDNIYRYTLAGTEVSALLGRMPSAVGYQPTLAEEMGRLQERITSTQTGSITSIQAVYVPADDLTDPSPATTFAHLDATVVLSRDIASLGIYPAVDPLDSTSRQLDPMVLGQEHYDVARGVQSTLQKYKELRDIIAILGMDELSDEDKLAVMRARKIQRFLSQPFHVAEVFTGSPGKYVALRDTIAGFKAILNGEYDHLPEQAFYMVGSIEEAVEKAKTLN.

148 to 155 (GGAGVGKT) contacts ATP.

It belongs to the ATPase alpha/beta chains family. As to quaternary structure, F-type ATPases have 2 components, CF(1) - the catalytic core - and CF(0) - the membrane proton channel. CF(1) has five subunits: alpha(3), beta(3), gamma(1), delta(1), epsilon(1). CF(0) has three main subunits: a(1), b(2) and c(9-12). The alpha and beta chains form an alternating ring which encloses part of the gamma chain. CF(1) is attached to CF(0) by a central stalk formed by the gamma and epsilon chains, while a peripheral stalk is formed by the delta and b chains.

The protein localises to the cell inner membrane. The enzyme catalyses ATP + H2O + 4 H(+)(in) = ADP + phosphate + 5 H(+)(out). In terms of biological role, produces ATP from ADP in the presence of a proton gradient across the membrane. The catalytic sites are hosted primarily by the beta subunits. The protein is ATP synthase subunit beta of Neisseria gonorrhoeae (strain ATCC 700825 / FA 1090).